The chain runs to 225 residues: UPF0502 protein Ajs_3392 (225 aa).

It belongs to the UPF0502 family.

The chain is UPF0502 protein Ajs_3392 from Acidovorax sp. (strain JS42).